Here is a 292-residue protein sequence, read N- to C-terminus: UDP-3-O-acyl-N-acetylglucosamine deacetylase (292 aa).

Zn(2+) is bound by residues H76, H232, and D236. The active-site Proton donor is the H259.

This sequence belongs to the LpxC family. The cofactor is Zn(2+).

It catalyses the reaction a UDP-3-O-[(3R)-3-hydroxyacyl]-N-acetyl-alpha-D-glucosamine + H2O = a UDP-3-O-[(3R)-3-hydroxyacyl]-alpha-D-glucosamine + acetate. Its pathway is glycolipid biosynthesis; lipid IV(A) biosynthesis; lipid IV(A) from (3R)-3-hydroxytetradecanoyl-[acyl-carrier-protein] and UDP-N-acetyl-alpha-D-glucosamine: step 2/6. Its function is as follows. Catalyzes the hydrolysis of UDP-3-O-myristoyl-N-acetylglucosamine to form UDP-3-O-myristoylglucosamine and acetate, the committed step in lipid A biosynthesis. This Thermodesulfovibrio yellowstonii (strain ATCC 51303 / DSM 11347 / YP87) protein is UDP-3-O-acyl-N-acetylglucosamine deacetylase.